Here is a 786-residue protein sequence, read N- to C-terminus: MEQGAKRVRFYIVAADGLSKRDLFRQPDPFAILTVDGEQTHTTKVIKKSVNPYWNEGFEVTVKPSSVISIRLFDQKKFKKKDQGFLGLVSFRMREVGSFRSNREVSLTRPLKKSSTTNLSVLGNLVLKVAPSKIRAPAGNHSSTTANRTTSTPTTTTARTTRTTPRPTATTNTSNQSTSNSTRNGTSAATSNGTGTGAGTGASHRSSPVTNRQTNNTSALSNSNAHIMSSFEDQYGRLPPGWERRADSLGRTYYVDHNTRTTTWTRPASSTNPVHNTSSDSQRLNHQNRHLPDDSNPSLMQSDSGNDLPFGWEMRYTDTGRPYFVDHNTRTTTWVDPRNPLVRPNGGSSTVGSLMQPQSLSHLGPLPSGWEMRLTNSARVYFVDHNTKTTTWDDPRLPSALDQDVPQYKCDFRRKLIYFRSQPGMRPLPGQCNVKVRRDHIFEDSYAEIMRYSAHDLKKRLMIRFDGEDGLDYGGLSREFFFLLSHKMFDPIYCLFEYSAVDNYTLQINPHSSINPEHLNYFRFIGRVIGLAIFHRRFLDAFFVVSLYKKLLRKKVSLADMESIDAEFYRSLKWVLENDITGILDLTFSVEEDHFGEVRTVELITNGENIEVTEENKKKYVDLVTEWRVSKRVEQQFNAFYSGFVELVSPDLVNVFDERELELLIGGISDVDVEDWKSHTEYRTYIATDPVIKWFWEIIAGWKNEDRSKLLQFATGTSRIPVNGFRDLQGSDGPRKFTIEKAGTPDQLPVAHTCFNRLDLPDYPSKDTLHEKLSLAVENTVGFGNE.

The region spanning 1 to 109 (MEQGAKRVRF…RSNREVSLTR (109 aa)) is the C2 domain. Disordered regions lie at residues 134–225 (IRAP…NSNA) and 263–306 (TWTR…DSGN). Positions 142 to 193 (SSTTANRTTSTPTTTTARTTRTTPRPTATTNTSNQSTSNSTRNGTSAATSNG) are enriched in low complexity. Residues 204–213 (HRSSPVTNRQ) show a composition bias toward polar residues. Residues 214 to 225 (TNNTSALSNSNA) are compositionally biased toward low complexity. Residues 236–269 (GRLPPGWERRADSLGRTYYVDHNTRTTTWTRPAS) enclose the WW 1 domain. 2 stretches are compositionally biased toward polar residues: residues 263-285 (TWTR…QRLN) and 295-305 (SNPSLMQSDSG). 2 consecutive WW domains span residues 306 to 339 (NDLP…DPRN) and 364 to 397 (GPLP…DPRL). The HECT domain maps to 453-786 (SAHDLKKRLM…VENTVGFGNE (334 aa)). Cys754 (glycyl thioester intermediate) is an active-site residue.

It carries out the reaction S-ubiquitinyl-[E2 ubiquitin-conjugating enzyme]-L-cysteine + [acceptor protein]-L-lysine = [E2 ubiquitin-conjugating enzyme]-L-cysteine + N(6)-ubiquitinyl-[acceptor protein]-L-lysine.. It participates in protein modification; protein ubiquitination. In terms of biological role, E3 ubiquitin-protein ligase which accepts ubiquitin from an E2 ubiquitin-conjugating enzyme in the form of a thioester and then directly transfers the ubiquitin to targeted substrates. The sequence is that of E3 ubiquitin-protein ligase pub3 (pub3) from Schizosaccharomyces pombe (strain 972 / ATCC 24843) (Fission yeast).